Reading from the N-terminus, the 145-residue chain is Putative pre-16S rRNA nuclease (145 aa).

The protein belongs to the YqgF nuclease family.

It localises to the cytoplasm. Functionally, could be a nuclease involved in processing of the 5'-end of pre-16S rRNA. This is Putative pre-16S rRNA nuclease from Limosilactobacillus fermentum (strain NBRC 3956 / LMG 18251) (Lactobacillus fermentum).